Reading from the N-terminus, the 380-residue chain is Chorismate synthase (380 aa).

Arginine 47 contributes to the NADP(+) binding site. FMN contacts are provided by residues 124-126 (RSS), glycine 288, 303-307 (KPTST), and arginine 329.

It belongs to the chorismate synthase family. Homotetramer. FMNH2 is required as a cofactor.

It carries out the reaction 5-O-(1-carboxyvinyl)-3-phosphoshikimate = chorismate + phosphate. It functions in the pathway metabolic intermediate biosynthesis; chorismate biosynthesis; chorismate from D-erythrose 4-phosphate and phosphoenolpyruvate: step 7/7. Catalyzes the anti-1,4-elimination of the C-3 phosphate and the C-6 proR hydrogen from 5-enolpyruvylshikimate-3-phosphate (EPSP) to yield chorismate, which is the branch point compound that serves as the starting substrate for the three terminal pathways of aromatic amino acid biosynthesis. This reaction introduces a second double bond into the aromatic ring system. The protein is Chorismate synthase of Leptospira borgpetersenii serovar Hardjo-bovis (strain JB197).